We begin with the raw amino-acid sequence, 201 residues long: 7-methyl-GTP pyrophosphatase (201 aa).

The Proton acceptor role is filled by aspartate 73.

The protein belongs to the Maf family. YceF subfamily. A divalent metal cation serves as cofactor.

The protein resides in the cytoplasm. It catalyses the reaction N(7)-methyl-GTP + H2O = N(7)-methyl-GMP + diphosphate + H(+). Its function is as follows. Nucleoside triphosphate pyrophosphatase that hydrolyzes 7-methyl-GTP (m(7)GTP). May have a dual role in cell division arrest and in preventing the incorporation of modified nucleotides into cellular nucleic acids. This Thiobacillus denitrificans (strain ATCC 25259 / T1) protein is 7-methyl-GTP pyrophosphatase.